The chain runs to 192 residues: MKIGLFFGSFNPIHVGHLIIGNTMAETTDLDEVWYVVSPQNPFKKNQSLLHEFDRFDMVTAAIANNPKFRASDIEFSLPKPSYTVDTLTYISDKYPQHSFVLIIGEDNLDQFTNWKNHEQILHHYSLYVYPRPDSSNSFLREHKNVRLVAAPLLEISATYIRNLVKQEKSIRYLVSKEVEELILSRKYYSNY.

This sequence belongs to the NadD family.

The enzyme catalyses nicotinate beta-D-ribonucleotide + ATP + H(+) = deamido-NAD(+) + diphosphate. The protein operates within cofactor biosynthesis; NAD(+) biosynthesis; deamido-NAD(+) from nicotinate D-ribonucleotide: step 1/1. In terms of biological role, catalyzes the reversible adenylation of nicotinate mononucleotide (NaMN) to nicotinic acid adenine dinucleotide (NaAD). The sequence is that of Probable nicotinate-nucleotide adenylyltransferase from Cytophaga hutchinsonii (strain ATCC 33406 / DSM 1761 / CIP 103989 / NBRC 15051 / NCIMB 9469 / D465).